Reading from the N-terminus, the 396-residue chain is 8-amino-7-oxononanoate synthase (396 aa).

Arg21 serves as a coordination point for substrate. 112–113 is a binding site for pyridoxal 5'-phosphate; that stretch reads GY. His137 is a binding site for substrate. The pyridoxal 5'-phosphate site is built by Ser183, His211, and Thr239. Lys242 is subject to N6-(pyridoxal phosphate)lysine. Residue Thr358 coordinates substrate.

This sequence belongs to the class-II pyridoxal-phosphate-dependent aminotransferase family. BioF subfamily. As to quaternary structure, homodimer. Requires pyridoxal 5'-phosphate as cofactor.

It carries out the reaction 6-carboxyhexanoyl-[ACP] + L-alanine + H(+) = (8S)-8-amino-7-oxononanoate + holo-[ACP] + CO2. It participates in cofactor biosynthesis; biotin biosynthesis. Its function is as follows. Catalyzes the decarboxylative condensation of pimeloyl-[acyl-carrier protein] and L-alanine to produce 8-amino-7-oxononanoate (AON), [acyl-carrier protein], and carbon dioxide. The sequence is that of 8-amino-7-oxononanoate synthase from Bordetella petrii (strain ATCC BAA-461 / DSM 12804 / CCUG 43448).